The sequence spans 446 residues: Na(+)-translocating NADH-quinone reductase subunit A (446 aa).

This sequence belongs to the NqrA family. Composed of six subunits; NqrA, NqrB, NqrC, NqrD, NqrE and NqrF.

It catalyses the reaction a ubiquinone + n Na(+)(in) + NADH + H(+) = a ubiquinol + n Na(+)(out) + NAD(+). In terms of biological role, NQR complex catalyzes the reduction of ubiquinone-1 to ubiquinol by two successive reactions, coupled with the transport of Na(+) ions from the cytoplasm to the periplasm. NqrA to NqrE are probably involved in the second step, the conversion of ubisemiquinone to ubiquinol. This Vibrio campbellii (strain ATCC BAA-1116) protein is Na(+)-translocating NADH-quinone reductase subunit A.